The sequence spans 84 residues: Cell division topological specificity factor (84 aa).

It belongs to the MinE family.

Prevents the cell division inhibition by proteins MinC and MinD at internal division sites while permitting inhibition at polar sites. This ensures cell division at the proper site by restricting the formation of a division septum at the midpoint of the long axis of the cell. This chain is Cell division topological specificity factor, found in Pseudomonas putida (strain ATCC 700007 / DSM 6899 / JCM 31910 / BCRC 17059 / LMG 24140 / F1).